A 643-amino-acid polypeptide reads, in one-letter code: MASTSNLLDVVRHYQRSIEKHGEDEQRLLHCITKLFNLPIKFEHLQETGIGKTVNALRKISGEVGVAAKTLVTKWKAMVAKEDPSIASTPTAIHNEEDSGKTKSSDEDPDQENKGGNSSSGEDLNTSKHKSKHAKSTKHERSSSSRSHSKSRSDSDKKHKSSRHDKSKDRDKDREGQKEAKEHKEKKSNGEHKSKDSSKSSSSHKSSKSESHKSEHTKSKHEKDKTSHSELKEVKDKSSKHKSSSSKSSKRSHSPPRHEEESQKAKIPKVKSKSEEDSADGFDSSMGANFDDVLGLLNIPISSKKSSSNSKSKFVAKPTAAPSSSALSAPTTAGSSKEALSTSSRPTSKKPELLASTAKLEPLDPNIALELPTISNNYKPMPLNQTVMDVVFNQGGSHKAQASRYFNESEALAQGISSKTMRTKIYSGVRTGQILQVPSLFDLCTRVLQKNIDALEYTGGVPFEVLRPVLERATPQQLLNFEEYNPYLMDDSDVLWQQHVQRHCRSQRREEMETWREMFLRCQEEKDRKLSILAESIKASQKISEAPVRKTQLAFVDSMVKPPRSVQRKQEQYGTKGKLIATPAARVAALSSVTPNAAKVGDARLRVLAAARDTAQVGAGPARSKKAPLMAKTLQFMRGRLKR.

The region spanning 9–82 (DVVRHYQRSI…TKWKAMVAKE (74 aa)) is the TFIIS N-terminal domain. Disordered stretches follow at residues 86–289 (IAST…MGAN) and 302–351 (SSKK…SKKP). Residues 94-106 (HNEEDSGKTKSSD) show a composition bias toward basic and acidic residues. Residues 114-124 (KGGNSSSGEDL) show a composition bias toward polar residues. Phosphoserine is present on serine 120. Basic residues predominate over residues 127–136 (SKHKSKHAKS). Composition is skewed to basic and acidic residues over residues 164–198 (HDKS…KDSS) and 207–237 (SKSE…VKDK). Basic residues predominate over residues 238 to 255 (SSKHKSSSSKSSKRSHSP). The span at 302-336 (SSKKSSSNSKSKFVAKPTAAPSSSALSAPTTAGSS) shows a compositional bias: low complexity. Positions 413 to 571 (AQGISSKTMR…PPRSVQRKQE (159 aa)) are activation domain. The interacting with Elongin BC complex stretch occupies residues 439-448 (SLFDLCTRVL).

It localises to the nucleus. In terms of biological role, SIII, also known as elongin, is a general transcription elongation factor that increases the RNA polymerase II transcription elongation past template-encoded arresting sites. Subunit A is transcriptionally active and its transcription activity is strongly enhanced by binding to the dimeric complex of the SIII regulatory subunits B and C (elongin BC complex). May play an important role in metamorphosis. The polypeptide is Transcription elongation factor B polypeptide 3 (EloA) (Drosophila melanogaster (Fruit fly)).